A 476-amino-acid chain; its full sequence is Proline--tRNA ligase (476 aa).

It belongs to the class-II aminoacyl-tRNA synthetase family. ProS type 3 subfamily. In terms of assembly, homodimer.

The protein localises to the cytoplasm. The catalysed reaction is tRNA(Pro) + L-proline + ATP = L-prolyl-tRNA(Pro) + AMP + diphosphate. Catalyzes the attachment of proline to tRNA(Pro) in a two-step reaction: proline is first activated by ATP to form Pro-AMP and then transferred to the acceptor end of tRNA(Pro). The chain is Proline--tRNA ligase from Rubrobacter xylanophilus (strain DSM 9941 / JCM 11954 / NBRC 16129 / PRD-1).